A 441-amino-acid polypeptide reads, in one-letter code: Histidinol dehydrogenase (441 aa).

NAD(+) is bound by residues tyrosine 136, glutamine 197, and asparagine 220. Substrate contacts are provided by serine 243, glutamine 265, and histidine 268. The Zn(2+) site is built by glutamine 265 and histidine 268. Catalysis depends on proton acceptor residues glutamate 333 and histidine 334. Substrate contacts are provided by histidine 334, aspartate 367, glutamate 421, and histidine 426. A Zn(2+)-binding site is contributed by aspartate 367. Histidine 426 contributes to the Zn(2+) binding site.

This sequence belongs to the histidinol dehydrogenase family. The cofactor is Zn(2+).

It carries out the reaction L-histidinol + 2 NAD(+) + H2O = L-histidine + 2 NADH + 3 H(+). It participates in amino-acid biosynthesis; L-histidine biosynthesis; L-histidine from 5-phospho-alpha-D-ribose 1-diphosphate: step 9/9. Functionally, catalyzes the sequential NAD-dependent oxidations of L-histidinol to L-histidinaldehyde and then to L-histidine. The sequence is that of Histidinol dehydrogenase from Pseudomonas fluorescens (strain Pf0-1).